Here is a 419-residue protein sequence, read N- to C-terminus: Serine hydroxymethyltransferase (419 aa).

(6S)-5,6,7,8-tetrahydrofolate contacts are provided by residues leucine 121 and 125–127 (GHL). Lysine 231 is modified (N6-(pyridoxal phosphate)lysine).

The protein belongs to the SHMT family. As to quaternary structure, homodimer. It depends on pyridoxal 5'-phosphate as a cofactor.

Its subcellular location is the cytoplasm. It catalyses the reaction (6R)-5,10-methylene-5,6,7,8-tetrahydrofolate + glycine + H2O = (6S)-5,6,7,8-tetrahydrofolate + L-serine. Its pathway is one-carbon metabolism; tetrahydrofolate interconversion. The protein operates within amino-acid biosynthesis; glycine biosynthesis; glycine from L-serine: step 1/1. In terms of biological role, catalyzes the reversible interconversion of serine and glycine with tetrahydrofolate (THF) serving as the one-carbon carrier. This reaction serves as the major source of one-carbon groups required for the biosynthesis of purines, thymidylate, methionine, and other important biomolecules. Also exhibits THF-independent aldolase activity toward beta-hydroxyamino acids, producing glycine and aldehydes, via a retro-aldol mechanism. This is Serine hydroxymethyltransferase from Phytoplasma mali (strain AT).